A 69-amino-acid chain; its full sequence is Disintegrin EMF10A (69 aa).

The Disintegrin domain occupies 1-66 (MNSANPCCDP…DCPRNPWKSE (66 aa)). Cystine bridges form between C7–C30, C21–C27, C26–C51, and C39–C58. The short motif at 43–45 (RGD) is the Cell attachment site element.

Belongs to the disintegrin family. Dimeric disintegrin subfamily. As to quaternary structure, heterodimer with EMF10B; disulfide-linked. Expressed by the venom gland.

Its subcellular location is the secreted. In terms of biological role, extremely potent and selective inhibitor of integrin alpha-5/beta-1 (ITGA5/ITGB1). Partially inhibits adhesion of cells expressing alpha-IIb/beta-3 (ITGA2B/ITGB3), alpha-V/beta-3 (ITGAV/ITGB3), and alpha-4/beta-1 (ITGA4/ITGB1) to appropriate ligands only at concentration higher than 500 nM. Weakly inhibits ADP-induced platelet aggregation. The polypeptide is Disintegrin EMF10A (Eristicophis macmahoni (Leaf-nosed viper)).